We begin with the raw amino-acid sequence, 503 residues long: Probable cytosol aminopeptidase (503 aa).

Mn(2+) contacts are provided by Lys-270 and Asp-275. Lys-282 is an active-site residue. Mn(2+)-binding residues include Asp-293, Asp-352, and Glu-354. Arg-356 is an active-site residue.

It belongs to the peptidase M17 family. The cofactor is Mn(2+).

The protein localises to the cytoplasm. It carries out the reaction Release of an N-terminal amino acid, Xaa-|-Yaa-, in which Xaa is preferably Leu, but may be other amino acids including Pro although not Arg or Lys, and Yaa may be Pro. Amino acid amides and methyl esters are also readily hydrolyzed, but rates on arylamides are exceedingly low.. The catalysed reaction is Release of an N-terminal amino acid, preferentially leucine, but not glutamic or aspartic acids.. Presumably involved in the processing and regular turnover of intracellular proteins. Catalyzes the removal of unsubstituted N-terminal amino acids from various peptides. The protein is Probable cytosol aminopeptidase of Klebsiella pneumoniae (strain 342).